The chain runs to 368 residues: 3-dehydroquinate synthase (368 aa).

Residues 112-116 (GVIGD), 136-137 (TT), Lys149, Lys158, and 176-179 (TLIT) contribute to the NAD(+) site. Positions 191, 256, and 273 each coordinate Zn(2+).

Belongs to the sugar phosphate cyclases superfamily. Dehydroquinate synthase family. It depends on Co(2+) as a cofactor. The cofactor is Zn(2+). NAD(+) is required as a cofactor.

It localises to the cytoplasm. The catalysed reaction is 7-phospho-2-dehydro-3-deoxy-D-arabino-heptonate = 3-dehydroquinate + phosphate. It participates in metabolic intermediate biosynthesis; chorismate biosynthesis; chorismate from D-erythrose 4-phosphate and phosphoenolpyruvate: step 2/7. Its function is as follows. Catalyzes the conversion of 3-deoxy-D-arabino-heptulosonate 7-phosphate (DAHP) to dehydroquinate (DHQ). The polypeptide is 3-dehydroquinate synthase (Prochlorococcus marinus (strain NATL2A)).